A 234-amino-acid polypeptide reads, in one-letter code: Leucyl/phenylalanyl-tRNA--protein transferase (234 aa).

This sequence belongs to the L/F-transferase family.

It localises to the cytoplasm. The enzyme catalyses N-terminal L-lysyl-[protein] + L-leucyl-tRNA(Leu) = N-terminal L-leucyl-L-lysyl-[protein] + tRNA(Leu) + H(+). The catalysed reaction is N-terminal L-arginyl-[protein] + L-leucyl-tRNA(Leu) = N-terminal L-leucyl-L-arginyl-[protein] + tRNA(Leu) + H(+). It catalyses the reaction L-phenylalanyl-tRNA(Phe) + an N-terminal L-alpha-aminoacyl-[protein] = an N-terminal L-phenylalanyl-L-alpha-aminoacyl-[protein] + tRNA(Phe). In terms of biological role, functions in the N-end rule pathway of protein degradation where it conjugates Leu, Phe and, less efficiently, Met from aminoacyl-tRNAs to the N-termini of proteins containing an N-terminal arginine or lysine. In Pectobacterium atrosepticum (strain SCRI 1043 / ATCC BAA-672) (Erwinia carotovora subsp. atroseptica), this protein is Leucyl/phenylalanyl-tRNA--protein transferase.